The following is a 406-amino-acid chain: FBD-associated F-box protein At1g60410 (406 aa).

One can recognise an F-box domain in the interval Lys-9 to Phe-59. One can recognise an FBD domain in the interval Met-355–Gly-405.

The sequence is that of FBD-associated F-box protein At1g60410 from Arabidopsis thaliana (Mouse-ear cress).